Reading from the N-terminus, the 155-residue chain is Transcription antitermination protein NusB (155 aa).

It belongs to the NusB family.

In terms of biological role, involved in transcription antitermination. Required for transcription of ribosomal RNA (rRNA) genes. Binds specifically to the boxA antiterminator sequence of the ribosomal RNA (rrn) operons. This is Transcription antitermination protein NusB from Vibrio atlanticus (strain LGP32) (Vibrio splendidus (strain Mel32)).